The following is a 160-amino-acid chain: Large ribosomal subunit protein eL21A (160 aa).

Residues 114–138 (AKRKEAKAQGKTVQLRRQPAPPAKA) are disordered.

Belongs to the eukaryotic ribosomal protein eL21 family. As to quaternary structure, component of the large ribosomal subunit (LSU). Mature yeast ribosomes consist of a small (40S) and a large (60S) subunit. The 40S small subunit contains 1 molecule of ribosomal RNA (18S rRNA) and at least 33 different proteins. The large 60S subunit contains 3 rRNA molecules (25S, 5.8S and 5S rRNA) and at least 46 different proteins.

The protein resides in the cytoplasm. Its function is as follows. Component of the ribosome, a large ribonucleoprotein complex responsible for the synthesis of proteins in the cell. The small ribosomal subunit (SSU) binds messenger RNAs (mRNAs) and translates the encoded message by selecting cognate aminoacyl-transfer RNA (tRNA) molecules. The large subunit (LSU) contains the ribosomal catalytic site termed the peptidyl transferase center (PTC), which catalyzes the formation of peptide bonds, thereby polymerizing the amino acids delivered by tRNAs into a polypeptide chain. The nascent polypeptides leave the ribosome through a tunnel in the LSU and interact with protein factors that function in enzymatic processing, targeting, and the membrane insertion of nascent chains at the exit of the ribosomal tunnel. This chain is Large ribosomal subunit protein eL21A (rpl2101), found in Schizosaccharomyces pombe (strain 972 / ATCC 24843) (Fission yeast).